We begin with the raw amino-acid sequence, 211 residues long: Large ribosomal subunit protein uL4 (211 aa).

The tract at residues 48 to 89 (KRAGTASTKTRVEVRGGGAKPWRQKGTGRARAGSRTSPLWRG) is disordered.

Belongs to the universal ribosomal protein uL4 family. Part of the 50S ribosomal subunit.

In terms of biological role, one of the primary rRNA binding proteins, this protein initially binds near the 5'-end of the 23S rRNA. It is important during the early stages of 50S assembly. It makes multiple contacts with different domains of the 23S rRNA in the assembled 50S subunit and ribosome. Its function is as follows. Forms part of the polypeptide exit tunnel. This is Large ribosomal subunit protein uL4 from Desulfotalea psychrophila (strain LSv54 / DSM 12343).